Here is a 269-residue protein sequence, read N- to C-terminus: MKI67 FHA domain-interacting nucleolar phosphoprotein (269 aa).

The 79-residue stretch at 45–123 folds into the RRM domain; it reads GVLYVGHLPR…RIIKCHVIPP (79 aa). A disordered region spans residues 234–269; it reads DEIVIKVKPLPENSDDVEESEEESAEEDEGEEEEAA. Acidic residues predominate over residues 246 to 269; sequence NSDDVEESEEESAEEDEGEEEEAA.

It is found in the nucleus. The protein resides in the nucleolus. Its function is as follows. Plays an essential role in early embryonic development. This Danio rerio (Zebrafish) protein is MKI67 FHA domain-interacting nucleolar phosphoprotein (nifk).